The sequence spans 430 residues: Adenylosuccinate synthetase (430 aa).

Residues 12 to 18 and 40 to 42 contribute to the GTP site; these read GDEGKGK and GHT. The active-site Proton acceptor is aspartate 13. Residues aspartate 13 and glycine 40 each contribute to the Mg(2+) site. IMP is bound by residues 13–16, 38–41, threonine 130, arginine 144, glutamine 224, threonine 239, and arginine 303; these read DEGK and NAGH. Histidine 41 acts as the Proton donor in catalysis. A substrate-binding site is contributed by 299–305; that stretch reads TVTSRKR. Residues arginine 305, 331-333, and 413-415 contribute to the GTP site; these read KLD and STS.

This sequence belongs to the adenylosuccinate synthetase family. As to quaternary structure, homodimer. It depends on Mg(2+) as a cofactor.

It localises to the cytoplasm. It catalyses the reaction IMP + L-aspartate + GTP = N(6)-(1,2-dicarboxyethyl)-AMP + GDP + phosphate + 2 H(+). The protein operates within purine metabolism; AMP biosynthesis via de novo pathway; AMP from IMP: step 1/2. Plays an important role in the de novo pathway of purine nucleotide biosynthesis. Catalyzes the first committed step in the biosynthesis of AMP from IMP. The protein is Adenylosuccinate synthetase of Pelagibacter ubique (strain HTCC1062).